Reading from the N-terminus, the 104-residue chain is Nucleoid-associated protein jk2011 (104 aa).

The protein belongs to the YbaB/EbfC family. In terms of assembly, homodimer.

The protein resides in the cytoplasm. Its subcellular location is the nucleoid. Functionally, binds to DNA and alters its conformation. May be involved in regulation of gene expression, nucleoid organization and DNA protection. The sequence is that of Nucleoid-associated protein jk2011 from Corynebacterium jeikeium (strain K411).